The sequence spans 160 residues: Lipoprotein signal peptidase (160 aa).

2 helical membrane-spanning segments follow: residues 63–83 (YRLPFFILVSVVALGVIAVTF) and 89–109 (DQHLAAAALALIFSGALGNLI). Active-site residues include aspartate 119 and aspartate 137. A helical membrane pass occupies residues 132–152 (AFNVADSAICVGVALLAVDMI).

This sequence belongs to the peptidase A8 family.

The protein resides in the cell inner membrane. It catalyses the reaction Release of signal peptides from bacterial membrane prolipoproteins. Hydrolyzes -Xaa-Yaa-Zaa-|-(S,diacylglyceryl)Cys-, in which Xaa is hydrophobic (preferably Leu), and Yaa (Ala or Ser) and Zaa (Gly or Ala) have small, neutral side chains.. Its pathway is protein modification; lipoprotein biosynthesis (signal peptide cleavage). Functionally, this protein specifically catalyzes the removal of signal peptides from prolipoproteins. The sequence is that of Lipoprotein signal peptidase from Geobacter sulfurreducens (strain ATCC 51573 / DSM 12127 / PCA).